The following is a 221-amino-acid chain: uncharacterized protein (221 aa).

To E.coli YheO.

This is an uncharacterized protein from Haemophilus influenzae (strain ATCC 51907 / DSM 11121 / KW20 / Rd).